The primary structure comprises 276 residues: Secreted RxLR effector protein 120 (276 aa).

An N-terminal signal peptide occupies residues 1-21 (MRGAYYVITALLVVASSQTSA). Residues 48–65 (QSLRGSRDVPDDLAHEER) carry the RxLR-dEER motif. Positions 97–130 (GKRPRVAEKDALEKASGADEASKKPRNTATDDAF) are disordered. Basic and acidic residues predominate over residues 101–119 (RVAEKDALEKASGADEASK).

This sequence belongs to the RxLR effector family.

The protein localises to the secreted. Its subcellular location is the host nucleus. In terms of biological role, secreted effector that completely suppresses the host cell death induced by cell death-inducing proteins. The protein is Secreted RxLR effector protein 120 of Plasmopara viticola (Downy mildew of grapevine).